The primary structure comprises 58 residues: Large ribosomal subunit protein bL32 (58 aa).

Belongs to the bacterial ribosomal protein bL32 family.

The polypeptide is Large ribosomal subunit protein bL32 (Synechococcus sp. (strain WH7803)).